The following is a 297-amino-acid chain: Streptogrisin-A (297 aa).

The first 38 residues, 1 to 38 (MTFKRFSPLSSTSRYARLLAVASGLVAAAALATPSAVA), serve as a signal peptide directing secretion. A propeptide spanning residues 39–115 (APEAESKATV…VKRAEGKFTP (77 aa)) is cleaved from the precursor. A disulfide bridge links Cys-130 with Cys-150. Catalysis depends on charge relay system residues His-149, Asp-171, and Ser-253. Cysteines 247 and 274 form a disulfide.

This sequence belongs to the peptidase S1 family. As to quaternary structure, monomer.

It carries out the reaction Hydrolysis of proteins with specificity similar to chymotrypsin.. Its function is as follows. Has a primary specificity for large aliphatic or aromatic amino acids. The protein is Streptogrisin-A (sprA) of Streptomyces griseus.